We begin with the raw amino-acid sequence, 174 residues long: FMN-dependent NADPH-azoreductase (174 aa).

FMN contacts are provided by residues Thr-9–Arg-11, Arg-15–Thr-16, Glu-73–Ser-76, and Gly-106.

The protein belongs to the azoreductase type 2 family. Homotetramer. FMN serves as cofactor.

In terms of biological role, catalyzes the reductive cleavage of azo bond in aromatic azo compounds to the corresponding amines. Requires NADPH, but not NADH, as an electron donor for its activity. This Bacillus subtilis (strain 168) protein is FMN-dependent NADPH-azoreductase (azr).